The chain runs to 329 residues: Serine/threonine-protein phosphatase PP2A catalytic subunit (329 aa).

The interval 1–25 (MDNNMEIDAARSPEPHHLSPTTDPG) is disordered. Over residues 8–17 (DAARSPEPHH) the composition is skewed to basic and acidic residues. D77, H79, D105, and N137 together coordinate Mn(2+). H138 (proton donor) is an active-site residue. Residues H187 and H261 each coordinate Mn(2+). Residue L329 is modified to Leucine methyl ester.

The protein belongs to the PPP phosphatase family. PP-2A subfamily. Mn(2+) serves as cofactor.

The enzyme catalyses O-phospho-L-seryl-[protein] + H2O = L-seryl-[protein] + phosphate. It catalyses the reaction O-phospho-L-threonyl-[protein] + H2O = L-threonyl-[protein] + phosphate. Its function is as follows. Involved in hyphal morphogenesis. The polypeptide is Serine/threonine-protein phosphatase PP2A catalytic subunit (pphA) (Emericella nidulans (strain FGSC A4 / ATCC 38163 / CBS 112.46 / NRRL 194 / M139) (Aspergillus nidulans)).